The chain runs to 387 residues: MEQVVIVDAIRTPMGRSKGGAFRNVRAEDLSAHLMRSLLARNPALEAAALDDIYWGCVQQTLEQGFNIARNAALLAEVPHSVPAVTVNRLCGSSMQALHDAARMIMTGDAQACLVGGVEHMGHVPMSHGVDFHPGLSRNVAKAAGMMGLTAEMLARMHGISREMQDAFAARSHARAWAATQSGAFKNEIIPTGGHDADGVLKQFNYDEVIRPETTVEALATLRPAFDPVNGTVTAGTSSALSDGAAAMLVMSESRAHELGLKPRARVRSMAVVGCNPSIMGYGPVPASKLALKKAGLSASDIGVFEMNEAFAAQILPCIKDLGLMEQIDEKINLNGGAIALGHPLGCSGARISTTLLNLMERKDVQFGLATMCIGLGQGIATVFERV.

Catalysis depends on C91, which acts as the Acyl-thioester intermediate. Residues H343 and C373 each act as proton acceptor in the active site.

Belongs to the thiolase-like superfamily. Thiolase family. In terms of assembly, heterotetramer of two alpha chains (FadB) and two beta chains (FadA).

Its subcellular location is the cytoplasm. It carries out the reaction an acyl-CoA + acetyl-CoA = a 3-oxoacyl-CoA + CoA. The protein operates within lipid metabolism; fatty acid beta-oxidation. Catalyzes the final step of fatty acid oxidation in which acetyl-CoA is released and the CoA ester of a fatty acid two carbons shorter is formed. The protein is 3-ketoacyl-CoA thiolase of Shigella boydii serotype 4 (strain Sb227).